A 375-amino-acid chain; its full sequence is ATP-sensitive inward rectifier potassium channel 15 (375 aa).

Residues 1–60 (MDAIHLGMSSAPLVKHTNGVGLKAHRPRVMSKSGHSNVRIDKVDGIYLLYLQDLWTTVID) lie on the Cytoplasmic side of the membrane. A helical membrane pass occupies residues 61-87 (MKWRYKLTLFAATFVMTWFLFGVVYYA). The Extracellular portion of the chain corresponds to 88 to 113 (IAFIHGDLQLGESNSNHTPCIMKVDS). Residues 114 to 130 (LTGAFLFSLESQTTIGY) constitute an intramembrane region (helical; Pore-forming). Positions 127 to 132 (TIGYGV) match the Selectivity filter motif. Residues 131 to 139 (GVRSITEEC) lie on the Extracellular side of the membrane. Residues 140 to 165 (PHAIFLLVAQLVITTLIEIFITGTFL) form a helical membrane-spanning segment. Over 166-375 (AKIARPKKRA…RSLLLQQSNV (210 aa)) the chain is Cytoplasmic.

It belongs to the inward rectifier-type potassium channel (TC 1.A.2.1) family. KCNJ15 subfamily. In terms of assembly, can form heteromultimeric channels with Kir5.1/KCNJ16. Interacts with PATJ. Expressed in the proximal segment of the nephron.

It localises to the membrane. It is found in the cell membrane. The enzyme catalyses K(+)(in) = K(+)(out). With respect to regulation, channel activity is regulated by variations of cytosolic pH; reversibly inhibited by acidic pH values. Inhibited by Ba(2+) and Cs(+) in a voltage-dependent manner. Inward rectifier potassium channels are characterized by a greater tendency to allow potassium to flow into the cell rather than out of it. Their voltage dependence is regulated by the concentration of extracellular potassium; as external potassium is raised, the voltage range of the channel opening shifts to more positive voltages. The inward rectification is mainly due to the blockage of outward current by internal magnesium. This chain is ATP-sensitive inward rectifier potassium channel 15 (Kcnj15), found in Mus musculus (Mouse).